The sequence spans 831 residues: G-type lectin S-receptor-like serine/threonine-protein kinase At1g61390 (831 aa).

The signal sequence occupies residues 1–42; the sequence is MYKLPQRNCADKQEYTVHMRKMGMVIFACLLLLIIFPTFGYA. The 120-residue stretch at 43–162 folds into the Bulb-type lectin domain; sequence DINTSSPLSI…VSGKTLWKSF (120 aa). The Extracellular segment spans residues 43–448; sequence DINTSSPLSI…SSELAGSNRT (406 aa). Residues N45, N71, N106, and N112 are each glycosylated (N-linked (GlcNAc...) asparagine). Residues 298 to 334 enclose the EGF-like; atypical domain; it reads PTSSCDLYRACGPFGLCVRSRNPKCICLKGFVPKSDD. Intrachain disulfides connect C302/C314 and C308/C322. 4 N-linked (GlcNAc...) asparagine glycosylation sites follow: N340, N356, N399, and N446. The 87-residue stretch at 353–439 folds into the PAN domain; it reads CHTNSSTKTQ…GESLSLRLAS (87 aa). Disulfide bonds link C392–C413 and C396–C402. A helical membrane pass occupies residues 449-469; the sequence is KIILGTTVSLSIFVILVFAAY. Residues 470–831 are Cytoplasmic-facing; the sequence is KSWRYRTKQN…EITQSVIQGR (362 aa). Positions 520–803 constitute a Protein kinase domain; the sequence is FSSSNKLGQG…ELPSPKQPTF (284 aa). Residues 526 to 534 and K548 contribute to the ATP site; that span reads LGQGGFGPV. S554 and S569 each carry phosphoserine. Positions 609–626 are caM-binding; that stretch reads TLKFEIDWQKRFNIIQGV. Residue D645 is the Proton acceptor of the active site. Phosphoserine is present on residues S649 and S662. Position 679 is a phosphothreonine (T679). Phosphoserine is present on residues S722 and S814.

This sequence belongs to the protein kinase superfamily. Ser/Thr protein kinase family.

The protein localises to the cell membrane. The enzyme catalyses L-seryl-[protein] + ATP = O-phospho-L-seryl-[protein] + ADP + H(+). It catalyses the reaction L-threonyl-[protein] + ATP = O-phospho-L-threonyl-[protein] + ADP + H(+). The sequence is that of G-type lectin S-receptor-like serine/threonine-protein kinase At1g61390 from Arabidopsis thaliana (Mouse-ear cress).